The primary structure comprises 517 residues: 3-hydroxyphenylacetate 6-hydroxylase (517 aa).

A heme-binding site is contributed by Cys449.

The protein belongs to the cytochrome P450 family.

The enzyme catalyses 3-hydroxyphenylacetate + NADH + O2 + H(+) = homogentisate + NAD(+) + H2O. It carries out the reaction 3-hydroxyphenylacetate + NADPH + O2 + H(+) = homogentisate + NADP(+) + H2O. It catalyses the reaction 3,4-dihydroxyphenylacetate + NADH + O2 + H(+) = 2,4,5-trihydroxyphenylacetate + NAD(+) + H2O. The catalysed reaction is 3,4-dihydroxyphenylacetate + NADPH + O2 + H(+) = 2,4,5-trihydroxyphenylacetate + NADP(+) + H2O. The protein operates within aromatic compound metabolism; phenylacetate degradation. In terms of biological role, catalyzes the hydroxylation of 3-hydroxyphenylacetate and 3,4-dihydroxyphenylacetate to 2,5-dihydroxyphenylacetate (homogentisate) and 2,4,5-trihydroxyphenylacetate, respectively. Both of these compounds are used as substrate by homogentisate dioxygenase in the homogentisate pathway. The homogentisate pathway is used to catabolize phenylacetate and use it as a carbon source. Can also catalyze the hydroxylation of phenylacetate to 2-hydroxyphenylacetate at low efficiency to compensate for loss of phacA. The protein is 3-hydroxyphenylacetate 6-hydroxylase (phacB) of Emericella nidulans (Aspergillus nidulans).